A 573-amino-acid chain; its full sequence is Urease subunit alpha 2 (573 aa).

Residues 136–573 (GAIDAHVHLI…LPMAQRYFLF (438 aa)) form the Urease domain. Positions 141, 143, and 224 each coordinate Ni(2+). N6-carboxylysine is present on Lys224. Substrate is bound at residue His226. His253 and His279 together coordinate Ni(2+). His327 (proton donor) is an active-site residue. Asp367 is a Ni(2+) binding site.

It belongs to the metallo-dependent hydrolases superfamily. Urease alpha subunit family. In terms of assembly, may form a heterohexamer of 3 UreC (alpha) and 3 UreAB (gamma/beta) subunits. May also form a heterotrimer of UreA (gamma), UreB (beta) and UreC (alpha) subunits. Three heterotrimers associate to form the active enzyme. Ni cation serves as cofactor. Carboxylation allows a single lysine to coordinate two nickel ions.

It localises to the cytoplasm. It catalyses the reaction urea + 2 H2O + H(+) = hydrogencarbonate + 2 NH4(+). It functions in the pathway nitrogen metabolism; urea degradation; CO(2) and NH(3) from urea (urease route): step 1/1. In Streptomyces avermitilis (strain ATCC 31267 / DSM 46492 / JCM 5070 / NBRC 14893 / NCIMB 12804 / NRRL 8165 / MA-4680), this protein is Urease subunit alpha 2.